Reading from the N-terminus, the 172-residue chain is MIIFKDLLTGDEMFTDSSKYKVVDGCLYEVECRHISRRHGDIQLDGANPSQEEADEATDDIVESGLDLVLNQRLIETGFSKNDYKVYLKGYTKALQDKWKEMEKSESEINEAKTKLTEAVKKVLPKLSDLQFFMGESSNPDGLIALLEYRQVDEKEVPIMMFFKHGLDEEKV.

Residues 1 to 172 (MIIFKDLLTG…FKHGLDEEKV (172 aa)) enclose the TCTP domain.

This sequence belongs to the TCTP family. As to expression, expressed by the venom gland.

The protein localises to the secreted. Venom protein that causes edema, enhances vascular permeability and is likely related to the inflammatory activity of the venom. The chain is Translationally-controlled tumor protein homolog from Loxosceles intermedia (Brown spider).